Reading from the N-terminus, the 369-residue chain is Homoserine O-acetyltransferase (369 aa).

An AB hydrolase-1 domain is found at 44–350; that stretch reads NAILVAHAWT…AYGHDAFLLE (307 aa). The active-site Nucleophile is S150. Residue R217 participates in substrate binding. Active-site residues include D311 and H344. D345 is a binding site for substrate.

The protein belongs to the AB hydrolase superfamily. MetX family. As to quaternary structure, homodimer.

Its subcellular location is the cytoplasm. The enzyme catalyses L-homoserine + acetyl-CoA = O-acetyl-L-homoserine + CoA. Its pathway is amino-acid biosynthesis; L-methionine biosynthesis via de novo pathway; O-acetyl-L-homoserine from L-homoserine: step 1/1. Its function is as follows. Transfers an acetyl group from acetyl-CoA to L-homoserine, forming acetyl-L-homoserine. This Geobacter metallireducens (strain ATCC 53774 / DSM 7210 / GS-15) protein is Homoserine O-acetyltransferase.